A 344-amino-acid polypeptide reads, in one-letter code: Nuclear distribution protein nudE homolog 1 (344 aa).

Residues 1 to 93 form a self-association region; the sequence is MEDSGKTFGS…MQHSEGYRQI (93 aa). Residues 18–188 are a coiled coil; it reads WRDLAMTYKQ…ELAVQQKQDK (171 aa). Over residues 30–47 the composition is skewed to basic and acidic residues; the sequence is ENTQEELREFQEGSREYE. The tract at residues 30–65 is disordered; the sequence is ENTQEELREFQEGSREYEAELETQLQQAETRNRDLL. The tract at residues 88 to 156 is interaction with PAFAH1B1; sequence EGYRQISALE…ERNAFLESEL (69 aa). Positions 167–290 are interaction with CENPF; that stretch reads QRLKDEARDL…QSPSRKSGPA (124 aa). The disordered stretch occupies residues 181 to 243; it reads AVQQKQDKPR…CGLGSPSSGT (63 aa). The span at 208-230 shows a compositional bias: polar residues; it reads ATGSAPSTPITHQGSSSGLNTPE. S211 bears the Phosphoserine mark. A phosphothreonine mark is found at T215, T228, T243, and T246. Residue C274 is the site of S-palmitoyl cysteine; by ZDHHC2, ZDHHC3 and ZDHHC7 attachment. Residues 279-337 are disordered; sequence YDQSPSRKSGPALGRGTKNRDGIDRRPGSTAVGDKGSGKRLEFAKPSSQLSSPALPSTQ. S282 is subject to Phosphoserine. A compositionally biased stretch (basic and acidic residues) spans 296–305; that stretch reads KNRDGIDRRP. Residues 324–335 show a composition bias toward low complexity; sequence PSSQLSSPALPS.

This sequence belongs to the nudE family. As to quaternary structure, homodimer. Interacts with CNTRL, LIS1, dynein, SLMAP and TCP1. Interacts with CENPF, dynactin, tubulin gamma, PAFAH1B1, PCM1 and PCNT. Interacts with ZNF365. Interacts with GTP-bound RAB9A and RAB9B; the interaction leads to RAB9-dynein motor tethering. Interacts (via C-terminus) with MCRS1 (via C-terminus); phosphorylation of NDE1 inhibits the interaction. In terms of processing, phosphorylated in mitosis. Phosphorylation at Thr-246 is essential for the G2/M transition. As to expression, expressed in brain, heart, kidney, liver, lung, skeletal muscle, spleen and testis.

The protein localises to the cytoplasm. The protein resides in the cytoskeleton. Its subcellular location is the microtubule organizing center. It is found in the centrosome. It localises to the spindle. The protein localises to the chromosome. The protein resides in the centromere. Its subcellular location is the kinetochore. It is found in the cleavage furrow. It localises to the cytoplasmic vesicle membrane. Functionally, required for centrosome duplication and formation and function of the mitotic spindle. Essential for the development of the cerebral cortex. May regulate the production of neurons by controlling the orientation of the mitotic spindle during division of cortical neuronal progenitors of the proliferative ventricular zone of the brain. Orientation of the division plane perpendicular to the layers of the cortex gives rise to two proliferative neuronal progenitors whereas parallel orientation of the division plane yields one proliferative neuronal progenitor and a postmitotic neuron. A premature shift towards a neuronal fate within the progenitor population may result in an overall reduction in the final number of neurons and an increase in the number of neurons in the deeper layers of the cortex. Acts as a RAB9A/B effector that tethers RAB9-associated late endosomes to the dynein motor for their retrograde transport to the trans-Golgi network. The sequence is that of Nuclear distribution protein nudE homolog 1 from Rattus norvegicus (Rat).